We begin with the raw amino-acid sequence, 450 residues long: VGFKAGVKDYKLTYYTPEYETKDTDILAAFRVTPQPGVPPEEAGAAVAAESSTGTWTTVWTDGLTSLDRYKGRCYHIEPVAGEENQYIAYVAYPLDLFEEGSVTNMFTSIVGNVFGFKALRALRLEDLRIPVAYVKTFQGPPHGIQVERDKLNKYGRPLLGCTIKPKLGLSAKNYGRAVYECLRGGLDFTKDDENVNSQPFMRWRDRFLFCAEAIYKSQAETGEIKGHYLNATAGTCEEMMKRAIFARELGVPIVMHDYLTGGFTANTSLAHYCRDNGLLLHIHRAMHAVIDRQKNHGIHFRVLAKALRMSGGDHIHAGTVVGKLEGERDITLGFVDLLRDDFIEKDRSRGIYFTQDWVSLPGVLPVASGGIHVWHMPALTEIFGDDSVLQFGGGTLGHPWGNAPGAVANRVALEACVQARNEGRDLAREGNEIIREACKWSPELAAACE.

K4 is subject to N6,N6,N6-trimethyllysine. Positions 113 and 163 each coordinate substrate. Residue K165 is the Proton acceptor of the active site. K167 serves as a coordination point for substrate. Residues K191, D193, and E194 each coordinate Mg(2+). K191 is subject to N6-carboxylysine. The active-site Proton acceptor is the H284. R285, H317, and S369 together coordinate substrate.

It belongs to the RuBisCO large chain family. Type I subfamily. In terms of assembly, heterohexadecamer of 8 large chains and 8 small chains; disulfide-linked. The disulfide link is formed within the large subunit homodimers. Requires Mg(2+) as cofactor. Post-translationally, the disulfide bond which can form in the large chain dimeric partners within the hexadecamer appears to be associated with oxidative stress and protein turnover.

It is found in the plastid. Its subcellular location is the chloroplast. The enzyme catalyses 2 (2R)-3-phosphoglycerate + 2 H(+) = D-ribulose 1,5-bisphosphate + CO2 + H2O. It carries out the reaction D-ribulose 1,5-bisphosphate + O2 = 2-phosphoglycolate + (2R)-3-phosphoglycerate + 2 H(+). RuBisCO catalyzes two reactions: the carboxylation of D-ribulose 1,5-bisphosphate, the primary event in carbon dioxide fixation, as well as the oxidative fragmentation of the pentose substrate in the photorespiration process. Both reactions occur simultaneously and in competition at the same active site. The protein is Ribulose bisphosphate carboxylase large chain of Crassula rupestris subsp. marnieriana (Pygmyweed).